A 227-amino-acid chain; its full sequence is Uridylate kinase (227 aa).

9-10 (GS) is a binding site for ATP. Glycine 44 contributes to the UMP binding site. ATP-binding residues include glycine 45 and arginine 49. UMP contacts are provided by residues aspartate 66 and 114–120 (TVPGHTT). Residues threonine 140, phenylalanine 146, and aspartate 149 each coordinate ATP.

This sequence belongs to the UMP kinase family. Homohexamer.

The protein resides in the cytoplasm. The enzyme catalyses UMP + ATP = UDP + ADP. The protein operates within pyrimidine metabolism; CTP biosynthesis via de novo pathway; UDP from UMP (UMPK route): step 1/1. Its activity is regulated as follows. Inhibited by UTP. In terms of biological role, catalyzes the reversible phosphorylation of UMP to UDP. The polypeptide is Uridylate kinase (Natronomonas pharaonis (strain ATCC 35678 / DSM 2160 / CIP 103997 / JCM 8858 / NBRC 14720 / NCIMB 2260 / Gabara) (Halobacterium pharaonis)).